A 25-amino-acid chain; its full sequence is MRAKWRKKRTRRLKRKRRKVRARSK.

The interval 1–25 is disordered; that stretch reads MRAKWRKKRTRRLKRKRRKVRARSK.

The protein belongs to the eukaryotic ribosomal protein eS32 family. As to quaternary structure, component of the small ribosomal subunit (SSU). Mature yeast ribosomes consist of a small (40S) and a large (60S) subunit. The 40S small subunit contains 1 molecule of ribosomal RNA (18S rRNA) and 33 different proteins (encoded by 57 genes). The large 60S subunit contains 3 rRNA molecules (25S, 5.8S and 5S rRNA) and 46 different proteins (encoded by 81 genes).

Its subcellular location is the cytoplasm. Component of the ribosome, a large ribonucleoprotein complex responsible for the synthesis of proteins in the cell. The small ribosomal subunit (SSU) binds messenger RNAs (mRNAs) and translates the encoded message by selecting cognate aminoacyl-transfer RNA (tRNA) molecules. The large subunit (LSU) contains the ribosomal catalytic site termed the peptidyl transferase center (PTC), which catalyzes the formation of peptide bonds, thereby polymerizing the amino acids delivered by tRNAs into a polypeptide chain. The nascent polypeptides leave the ribosome through a tunnel in the LSU and interact with protein factors that function in enzymatic processing, targeting, and the membrane insertion of nascent chains at the exit of the ribosomal tunnel. The chain is Small ribosomal subunit protein eS32B from Saccharomyces cerevisiae (strain ATCC 204508 / S288c) (Baker's yeast).